Here is a 477-residue protein sequence, read N- to C-terminus: Glycogen synthase (477 aa).

Lys15 is an ADP-alpha-D-glucose binding site.

This sequence belongs to the glycosyltransferase 1 family. Bacterial/plant glycogen synthase subfamily.

The enzyme catalyses [(1-&gt;4)-alpha-D-glucosyl](n) + ADP-alpha-D-glucose = [(1-&gt;4)-alpha-D-glucosyl](n+1) + ADP + H(+). Its pathway is glycan biosynthesis; glycogen biosynthesis. Synthesizes alpha-1,4-glucan chains using ADP-glucose. This is Glycogen synthase from Shigella boydii serotype 18 (strain CDC 3083-94 / BS512).